A 382-amino-acid polypeptide reads, in one-letter code: Na(+)/H(+) antiporter NhaA (382 aa).

Transmembrane regions (helical) follow at residues 14–34, 49–69, 87–107, 117–137, 146–166, 171–191, 205–225, 252–272, 285–305, 321–341, and 356–376; these read AGGI…NSSL, MSVS…LIGL, IFPA…YVAF, GWAI…ALLG, VFLL…IAFF, LSVL…LLNA, FILW…GVVL, VAFA…LEGV, VALG…YLAV, IFAV…ISSL, and LGIL…LSIS.

The protein belongs to the NhaA Na(+)/H(+) (TC 2.A.33) antiporter family.

It is found in the cell inner membrane. The catalysed reaction is Na(+)(in) + 2 H(+)(out) = Na(+)(out) + 2 H(+)(in). Its function is as follows. Na(+)/H(+) antiporter that extrudes sodium in exchange for external protons. This Aliivibrio fischeri (strain ATCC 700601 / ES114) (Vibrio fischeri) protein is Na(+)/H(+) antiporter NhaA.